The following is a 424-amino-acid chain: Histidine--tRNA ligase (424 aa).

The protein belongs to the class-II aminoacyl-tRNA synthetase family. As to quaternary structure, homodimer.

It localises to the cytoplasm. The catalysed reaction is tRNA(His) + L-histidine + ATP = L-histidyl-tRNA(His) + AMP + diphosphate + H(+). This Sodalis glossinidius (strain morsitans) protein is Histidine--tRNA ligase.